A 311-amino-acid polypeptide reads, in one-letter code: ADP-ribosyl cyclase/cyclic ADP-ribose hydrolase 2 (311 aa).

A signal peptide spans 1–24 (MAVQGGLLSLWLWLWLSLLTVLLG). 3 cysteine pairs are disulfide-bonded: Cys46–Cys60, Cys76–Cys156, and Cys137–Cys150. N-linked (GlcNAc...) asparagine glycans are attached at residues Asn59 and Asn88. Residue Trp102 coordinates NAD(+). Trp102 is a nicotinamide binding site. A glycan (N-linked (GlcNAc...) asparagine) is linked at Asn141. Residue Trp165 coordinates NAD(+). The N-linked (GlcNAc...) asparagine glycan is linked to Asn185. An NAD(+)-binding site is contributed by Glu203. Cystine bridges form between Cys231–Cys252 and Cys264–Cys273. A lipid anchor (GPI-anchor amidated serine) is attached at Ser286. The propeptide occupies 287-311 (ASLHAIGDASLLISLLVALASSSQA).

It belongs to the ADP-ribosyl cyclase family. Homodimer. As to expression, expressed in the bone marrow, spleen and thymus in lymphoid organs, and the lung, kidney and heart in non-lymphoid organs.

The protein resides in the cell membrane. It catalyses the reaction NAD(+) + H2O = ADP-D-ribose + nicotinamide + H(+). It carries out the reaction NAD(+) = cyclic ADP-beta-D-ribose + nicotinamide + H(+). The enzyme catalyses cyclic ADP-beta-D-ribose + H2O = ADP-D-ribose. In terms of biological role, catalyzes both the synthesis of cyclic ADP-beta-D-ribose (cADPR) from NAD(+), and its hydrolysis to ADP-D-ribose (ADPR). Cyclic ADPR is known to serve as an endogenous second messenger that elicits calcium release from intracellular stores, and thus regulates the mobilization of intracellular calcium. May be involved in pre-B-cell growth. The protein is ADP-ribosyl cyclase/cyclic ADP-ribose hydrolase 2 (Bst1) of Mus musculus (Mouse).